Here is a 319-residue protein sequence, read N- to C-terminus: Acetyl-coenzyme A carboxylase carboxyl transferase subunit alpha (319 aa).

The region spanning 32–293 (NVDTEVRALE…KAVLLNELEA (262 aa)) is the CoA carboxyltransferase C-terminal domain.

It belongs to the AccA family. As to quaternary structure, acetyl-CoA carboxylase is a heterohexamer composed of biotin carboxyl carrier protein (AccB), biotin carboxylase (AccC) and two subunits each of ACCase subunit alpha (AccA) and ACCase subunit beta (AccD).

It localises to the cytoplasm. It carries out the reaction N(6)-carboxybiotinyl-L-lysyl-[protein] + acetyl-CoA = N(6)-biotinyl-L-lysyl-[protein] + malonyl-CoA. It functions in the pathway lipid metabolism; malonyl-CoA biosynthesis; malonyl-CoA from acetyl-CoA: step 1/1. Component of the acetyl coenzyme A carboxylase (ACC) complex. First, biotin carboxylase catalyzes the carboxylation of biotin on its carrier protein (BCCP) and then the CO(2) group is transferred by the carboxyltransferase to acetyl-CoA to form malonyl-CoA. This Xylella fastidiosa (strain 9a5c) protein is Acetyl-coenzyme A carboxylase carboxyl transferase subunit alpha.